Reading from the N-terminus, the 186-residue chain is Elongation factor P (186 aa).

Belongs to the elongation factor P family.

The protein localises to the cytoplasm. It functions in the pathway protein biosynthesis; polypeptide chain elongation. Functionally, involved in peptide bond synthesis. Stimulates efficient translation and peptide-bond synthesis on native or reconstituted 70S ribosomes in vitro. Probably functions indirectly by altering the affinity of the ribosome for aminoacyl-tRNA, thus increasing their reactivity as acceptors for peptidyl transferase. The protein is Elongation factor P of Prochlorococcus marinus (strain MIT 9215).